A 174-amino-acid polypeptide reads, in one-letter code: CDP-archaeol synthase (174 aa).

The next 4 membrane-spanning stretches (helical) occupy residues 51 to 71 (LIGL…AGFI), 74 to 94 (SLLV…ALLG), 112 to 132 (MLPI…TFLL), and 136 to 156 (WLLA…IPVF).

This sequence belongs to the CDP-archaeol synthase family. Mg(2+) serves as cofactor.

It localises to the cell membrane. It carries out the reaction 2,3-bis-O-(geranylgeranyl)-sn-glycerol 1-phosphate + CTP + H(+) = CDP-2,3-bis-O-(geranylgeranyl)-sn-glycerol + diphosphate. Its pathway is membrane lipid metabolism; glycerophospholipid metabolism. Catalyzes the formation of CDP-2,3-bis-(O-geranylgeranyl)-sn-glycerol (CDP-archaeol) from 2,3-bis-(O-geranylgeranyl)-sn-glycerol 1-phosphate (DGGGP) and CTP. This reaction is the third ether-bond-formation step in the biosynthesis of archaeal membrane lipids. This is CDP-archaeol synthase from Methanocella arvoryzae (strain DSM 22066 / NBRC 105507 / MRE50).